A 338-amino-acid chain; its full sequence is Arginase, mitochondrial (338 aa).

Residues 1–15 (MSTIARRGFHYMQRL) constitute a mitochondrion transit peptide. Residues S73 and 92 to 95 (DSTN) each bind L-ornithine. 4 residues coordinate Mn(2+): H157, D181, H183, and D185. 185–187 (DLY) contacts L-ornithine. 191 to 193 (EGN) contributes to the substrate binding site. S220 contacts L-ornithine. Positions 266 and 268 each coordinate Mn(2+). Residue E309 coordinates substrate.

It belongs to the arginase family. In terms of assembly, forms homohexamers. Mn(2+) is required as a cofactor.

It is found in the mitochondrion. The enzyme catalyses L-arginine + H2O = urea + L-ornithine. It carries out the reaction agmatine + H2O = urea + putrescine. It functions in the pathway nitrogen metabolism; urea cycle; L-ornithine and urea from L-arginine: step 1/1. It participates in amine and polyamine biosynthesis; putrescine biosynthesis via agmatine pathway; putrescine from agmatine: step 1/1. Catalyzes the hydrolysis of L-arginine to urea and L-ornithine. The latter can be utilized in the urea cycle or as a precursor for the synthesis of both polyamines and proline. Possesses agmatinase activity. Catalyzes the formation of putrescine from agmatine. The protein is Arginase, mitochondrial of Medicago truncatula (Barrel medic).